A 179-amino-acid polypeptide reads, in one-letter code: MAKLHDYYKDEAVSQLMKQFGYHSVMQVPRVEKITLNMGVGEAIADKKLLDNAAADLTAISGQKPLITKARKSVAGFKIRQGYPIGCKVTLRGERMWEFFDRLISIAVPRIRDFRGLSAKSFDGRGNYSMGVHEQIIFPEIDYDKVDRVRGMDITITTTAKSDDEGRALLTAFNFPFRK.

It belongs to the universal ribosomal protein uL5 family. As to quaternary structure, part of the 50S ribosomal subunit; part of the 5S rRNA/L5/L18/L25 subcomplex. Contacts the 5S rRNA and the P site tRNA. Forms a bridge to the 30S subunit in the 70S ribosome.

This is one of the proteins that bind and probably mediate the attachment of the 5S RNA into the large ribosomal subunit, where it forms part of the central protuberance. In the 70S ribosome it contacts protein S13 of the 30S subunit (bridge B1b), connecting the 2 subunits; this bridge is implicated in subunit movement. Contacts the P site tRNA; the 5S rRNA and some of its associated proteins might help stabilize positioning of ribosome-bound tRNAs. In Sodalis glossinidius (strain morsitans), this protein is Large ribosomal subunit protein uL5.